The primary structure comprises 506 residues: MSFSVEVLAGIAIELQRGIGHQDRFQRLITTLRQVLACDASALLRYESRQFIPLAIDGLAQDVLGRRFTLEGHPRLEAIARAGDVVRFPADSDLPDPYDGLIPGQESLKVHACVGLPLFAGQNLIGALTLDAMTPEQFEVFRDEELRLVAALAAGALSNALLIEQLESQNMLPGSSGVFEPIKETHMIGLSPAMTQLKKEIEIVAGSDLNVLIGGETGTGKELVAKAIHQGSPRAVNPLVYLNCAALPESVAESELFGHVKGAFTGAISNRSGKFEMADNGTLFLDEIGELSLALQAKLLRVLQYGDIQRVGDDRSLRVDVRVLAATNRDLREEVLAGRFRADLFHRLSVFPLFVPPLRERGDDVVLLAGYFCEQCRLRLGLSRVVLSPGARRHLLNYGWPGNVRELEHAIHRAVVLARATRAGDEVVLEEQHFALSEDVLPAPSAESFLALPACRNLRESTENFQREMIRQALAQNNHNWAASARALETDVANLHRLAKRLGLKD.

The residue at position 57 (aspartate 57) is a 4-aspartylphosphate. A Sigma-54 factor interaction domain is found at 187-416 (MIGLSPAMTQ…LEHAIHRAVV (230 aa)). ATP is bound by residues 215–222 (GETGTGKE) and 278–287 (ADNGTLFLDE). Positions 481 to 500 (WAASARALETDVANLHRLAK) form a DNA-binding region, H-T-H motif.

It participates in nitrogen metabolism; nitric oxide reduction. Required for the expression of anaerobic nitric oxide (NO) reductase, acts as a transcriptional activator for at least the norVW operon. Activation also requires sigma-54. This chain is Anaerobic nitric oxide reductase transcription regulator NorR, found in Salmonella gallinarum (strain 287/91 / NCTC 13346).